The sequence spans 202 residues: Small ribosomal subunit protein uS4c (202 aa).

Residues 18–45 (LPGLTRKMAKRKSPPGQHGAASKKPSQY) are disordered. Residues 90–152 (MRLDTTIFRL…SRSRKLIEGY (63 aa)) enclose the S4 RNA-binding domain.

Belongs to the universal ribosomal protein uS4 family. Part of the 30S ribosomal subunit. Contacts protein S5. The interaction surface between S4 and S5 is involved in control of translational fidelity.

The protein localises to the plastid. It localises to the chloroplast. Functionally, one of the primary rRNA binding proteins, it binds directly to 16S rRNA where it nucleates assembly of the body of the 30S subunit. In terms of biological role, with S5 and S12 plays an important role in translational accuracy. The polypeptide is Small ribosomal subunit protein uS4c (rps4) (Nephroselmis olivacea (Green alga)).